A 124-amino-acid polypeptide reads, in one-letter code: UPF0102 protein Rcas_2007 (124 aa).

Belongs to the UPF0102 family.

This chain is UPF0102 protein Rcas_2007, found in Roseiflexus castenholzii (strain DSM 13941 / HLO8).